Reading from the N-terminus, the 528-residue chain is Probable cyclic di-GMP phosphodiesterase PdeC (528 aa).

The next 2 membrane-spanning stretches (helical) occupy residues 14–34 and 242–262; these read GIIF…FLWA and HLIF…LLWL. In terms of domain architecture, EAL spans 268–520; sequence YLSPKRKLQR…VFMQWMEQLP (253 aa).

Its subcellular location is the cell inner membrane. The enzyme catalyses 3',3'-c-di-GMP + H2O = 5'-phosphoguanylyl(3'-&gt;5')guanosine + H(+). Functionally, phosphodiesterase (PDE) that catalyzes the hydrolysis of cyclic-di-GMP (c-di-GMP) to 5'-pGpG. Cyclic-di-GMP is a second messenger which controls cell surface-associated traits in bacteria. Overexpression reduces biofilm formation. This chain is Probable cyclic di-GMP phosphodiesterase PdeC, found in Escherichia coli (strain K12).